We begin with the raw amino-acid sequence, 313 residues long: Olfactory receptor 10P1 (313 aa).

The Extracellular segment spans residues 1–25 (MAGENHTTLPEFLLLGFSDLKALQG). Asn-5 is a glycosylation site (N-linked (GlcNAc...) asparagine). Residues 26 to 46 (PLFWVVLLVYLVTLLGNSLII) form a helical membrane-spanning segment. Residues 47–54 (LLTQVSPA) are Cytoplasmic-facing. Residues 55 to 75 (LHSPMYFFLRQLSVVELFYTT) traverse the membrane as a helical segment. The Extracellular segment spans residues 76–100 (DIVPRTLANLGSPHPQAISFQGCAA). Residues 101–121 (QMYVFIVLGISECCLLTAMAY) traverse the membrane as a helical segment. Residues 122–140 (DRYVAICQPLRYSTLLSPR) are Cytoplasmic-facing. Residues 141–161 (ACMAMVGTSWLTGIITATTHA) form a helical membrane-spanning segment. The Extracellular portion of the chain corresponds to 162–198 (SLIFSLPFRSHPIIPHFLCDILPVLRLASAGKHRSEI). A helical membrane pass occupies residues 199-218 (SVMTATIVFIMIPFSLIVTS). The Cytoplasmic portion of the chain corresponds to 219 to 238 (YIRILGAILAMASTQSRRKV). A helical membrane pass occupies residues 239-259 (FSTCSSHLLVVSLFFGTASIT). Topologically, residues 260–272 (YIRPQAGSSVTTD) are extracellular. Residues 273–293 (RVLSLFYTVITPMLNPIIYTL) form a helical membrane-spanning segment. Over 294–313 (RNKDVRRALRHLVKRQRPSP) the chain is Cytoplasmic.

It belongs to the G-protein coupled receptor 1 family.

The protein resides in the cell membrane. Odorant receptor. This Homo sapiens (Human) protein is Olfactory receptor 10P1 (OR10P1).